A 526-amino-acid polypeptide reads, in one-letter code: MDKLQLWQRYQNWLYYHEGLGIYLDISRMRFDDPFVDRLKPKFDKAFQDMEALEAGAIANPDEGRMVGHYWLRAPELAPNDEARKEITEPLAAIADFVTKVHNTTIKPPTAEKFTDVLSIGIGGSALGPQFVAEALSSDFPPMAIHFIDNSDPAGIDRILTRLGDRLKSTLVIVTSKSGGTPETRNGMLEVKAAYEAKGLDFAPHAVAVTMPGSKMDQFAENWLARFPMQDWVGGRTSELSAVGLLPAALQGIDIQAMLAGAKEMDVATRVKDLKTNPAALLALAWYYSGNGKGEKDMVILPYKDSLLLFSRYLQQLVMESLGKETDLDGNTVYQGIAVYGNKGSTDQHAYVQQLREGVPNFFATFIEVLEDRQGESIELDPGITSGDYLSGFIQGTRQALYENNRDSVTITIPQVNPRIVGALIALYERTVSFYGSLVNVNAYHQPGVEAGKKMAASILSLQTEIQKVIKESVGSLDLVTLAEKAGDPEAVEAVYKIVRHLAANGRGVTLDGDLANPSSLKVSAG.

E320 functions as the Proton donor in the catalytic mechanism. Active-site residues include H349 and K453.

This sequence belongs to the GPI family.

Its subcellular location is the cytoplasm. It catalyses the reaction alpha-D-glucose 6-phosphate = beta-D-fructose 6-phosphate. The protein operates within carbohydrate biosynthesis; gluconeogenesis. Its pathway is carbohydrate degradation; glycolysis; D-glyceraldehyde 3-phosphate and glycerone phosphate from D-glucose: step 2/4. Its function is as follows. Catalyzes the reversible isomerization of glucose-6-phosphate to fructose-6-phosphate. This is Glucose-6-phosphate isomerase from Rippkaea orientalis (strain PCC 8801 / RF-1) (Cyanothece sp. (strain PCC 8801)).